The sequence spans 483 residues: Regulatory protein ViaA (483 aa).

It belongs to the ViaA family. As to quaternary structure, homodimer. Interacts with RavA.

Its subcellular location is the cytoplasm. Functionally, component of the RavA-ViaA chaperone complex, which may act on the membrane to optimize the function of some of the respiratory chains. ViaA stimulates the ATPase activity of RavA. The chain is Regulatory protein ViaA from Salmonella schwarzengrund (strain CVM19633).